A 349-amino-acid polypeptide reads, in one-letter code: UDP-3-O-acylglucosamine N-acyltransferase (349 aa).

His248 acts as the Proton acceptor in catalysis.

It belongs to the transferase hexapeptide repeat family. LpxD subfamily. In terms of assembly, homotrimer.

It catalyses the reaction a UDP-3-O-[(3R)-3-hydroxyacyl]-alpha-D-glucosamine + a (3R)-hydroxyacyl-[ACP] = a UDP-2-N,3-O-bis[(3R)-3-hydroxyacyl]-alpha-D-glucosamine + holo-[ACP] + H(+). The protein operates within bacterial outer membrane biogenesis; LPS lipid A biosynthesis. Functionally, catalyzes the N-acylation of UDP-3-O-acylglucosamine using 3-hydroxyacyl-ACP as the acyl donor. Is involved in the biosynthesis of lipid A, a phosphorylated glycolipid that anchors the lipopolysaccharide to the outer membrane of the cell. This chain is UDP-3-O-acylglucosamine N-acyltransferase, found in Colwellia psychrerythraea (strain 34H / ATCC BAA-681) (Vibrio psychroerythus).